The chain runs to 727 residues: ATP-dependent zinc metalloprotease FtsH (727 aa).

Residues 1 to 6 (MQKAFR) are Cytoplasmic-facing. Residues 7–27 (NVLVIAIIGVIIFGVFSYING) traverse the membrane as a helical segment. Topologically, residues 28–110 (NGNTPKQLSY…KVKEEEKQSV (83 aa)) are extracellular. Residues 111–131 (FVSMLTTLIPVLIIAFLFIFF) form a helical membrane-spanning segment. Over 132–727 (LSQAQGGGGG…PNDPNNPSNR (596 aa)) the chain is Cytoplasmic. Position 205-212 (205-212 (GPPGTGKT)) interacts with ATP. Histidine 427 is a Zn(2+) binding site. Residue glutamate 428 is part of the active site. Zn(2+) is bound by residues histidine 431 and aspartate 503. Basic and acidic residues-rich tracts occupy residues 645 to 684 (LEEG…DQLR) and 691 to 706 (NDQH…DTGH). Residues 645–727 (LEEGKEDMRE…PNDPNNPSNR (83 aa)) form a disordered region. Residues 710 to 727 (PNIDKPYNPNDPNNPSNR) are compositionally biased toward low complexity.

This sequence in the central section; belongs to the AAA ATPase family. It in the C-terminal section; belongs to the peptidase M41 family. In terms of assembly, homohexamer. Requires Zn(2+) as cofactor.

The protein localises to the cell membrane. Acts as a processive, ATP-dependent zinc metallopeptidase for both cytoplasmic and membrane proteins. Plays a role in the quality control of integral membrane proteins. The protein is ATP-dependent zinc metalloprotease FtsH of Staphylococcus haemolyticus (strain JCSC1435).